A 224-amino-acid polypeptide reads, in one-letter code: UPF0758 protein Psyr_0222 (224 aa).

The MPN domain occupies 102–224; sequence ALENPTQVRS…PLSMVERGLM (123 aa). Residues histidine 173, histidine 175, and aspartate 186 each coordinate Zn(2+). Residues 173–186 carry the JAMM motif motif; it reads HNHPSGITTPSRSD.

Belongs to the UPF0758 family.

This chain is UPF0758 protein Psyr_0222, found in Pseudomonas syringae pv. syringae (strain B728a).